The chain runs to 363 residues: Heat-inducible transcription repressor HrcA (363 aa).

This sequence belongs to the HrcA family.

In terms of biological role, negative regulator of class I heat shock genes (grpE-dnaK-dnaJ and groELS operons). Prevents heat-shock induction of these operons. This chain is Heat-inducible transcription repressor HrcA, found in Afipia carboxidovorans (strain ATCC 49405 / DSM 1227 / KCTC 32145 / OM5) (Oligotropha carboxidovorans).